Here is a 160-residue protein sequence, read N- to C-terminus: MTDQLTHFNEQNRARMVDVSEKDVTKRVAVAESQISMKPETLARIREGRIEKGDVLAVAQVAGVMAAKKTWEIIPMCHPLPLTGIDIQFAFEDETTLAITGTVKTTGKTGVEMEALTAVSVAALTVYDMCKAMDKEMIIGPTSLQSKTGGKSGDFHRGEK.

Substrate is bound by residues 76 to 78 and 113 to 114; these read MCH and ME. Aspartate 128 is an active-site residue.

The protein belongs to the MoaC family. As to quaternary structure, homohexamer; trimer of dimers.

It catalyses the reaction (8S)-3',8-cyclo-7,8-dihydroguanosine 5'-triphosphate = cyclic pyranopterin phosphate + diphosphate. It participates in cofactor biosynthesis; molybdopterin biosynthesis. Catalyzes the conversion of (8S)-3',8-cyclo-7,8-dihydroguanosine 5'-triphosphate to cyclic pyranopterin monophosphate (cPMP). In Brevibacillus brevis (strain 47 / JCM 6285 / NBRC 100599), this protein is Cyclic pyranopterin monophosphate synthase.